The primary structure comprises 352 residues: 3-isopropylmalate dehydrogenase (352 aa).

Gly-76–Glu-89 is a binding site for NAD(+). 4 residues coordinate substrate: Arg-96, Arg-106, Arg-134, and Asp-220. The Mg(2+) site is built by Asp-220, Asp-244, and Asp-248. Gly-277 to Asn-289 is an NAD(+) binding site.

It belongs to the isocitrate and isopropylmalate dehydrogenases family. LeuB type 1 subfamily. In terms of assembly, homodimer. Requires Mg(2+) as cofactor. Mn(2+) is required as a cofactor.

The protein resides in the cytoplasm. The catalysed reaction is (2R,3S)-3-isopropylmalate + NAD(+) = 4-methyl-2-oxopentanoate + CO2 + NADH. It participates in amino-acid biosynthesis; L-leucine biosynthesis; L-leucine from 3-methyl-2-oxobutanoate: step 3/4. In terms of biological role, catalyzes the oxidation of 3-carboxy-2-hydroxy-4-methylpentanoate (3-isopropylmalate) to 3-carboxy-4-methyl-2-oxopentanoate. The product decarboxylates to 4-methyl-2 oxopentanoate. The protein is 3-isopropylmalate dehydrogenase of Chlorobaculum tepidum (strain ATCC 49652 / DSM 12025 / NBRC 103806 / TLS) (Chlorobium tepidum).